A 273-amino-acid polypeptide reads, in one-letter code: Dermonecrotic toxin LdSicTox-alphaIB1bii (273 aa).

The active site involves His-5. The Mg(2+) site is built by Glu-25 and Asp-27. The Nucleophile role is filled by His-41. 2 disulfides stabilise this stretch: Cys-45–Cys-51 and Cys-47–Cys-190. Asp-85 is a binding site for Mg(2+). N-linked (GlcNAc...) asparagine glycosylation occurs at Asn-250.

Belongs to the arthropod phospholipase D family. Class II subfamily. Requires Mg(2+) as cofactor. As to expression, expressed by the venom gland.

It localises to the secreted. It catalyses the reaction an N-(acyl)-sphingosylphosphocholine = an N-(acyl)-sphingosyl-1,3-cyclic phosphate + choline. The enzyme catalyses an N-(acyl)-sphingosylphosphoethanolamine = an N-(acyl)-sphingosyl-1,3-cyclic phosphate + ethanolamine. It carries out the reaction a 1-acyl-sn-glycero-3-phosphocholine = a 1-acyl-sn-glycero-2,3-cyclic phosphate + choline. The catalysed reaction is a 1-acyl-sn-glycero-3-phosphoethanolamine = a 1-acyl-sn-glycero-2,3-cyclic phosphate + ethanolamine. Dermonecrotic toxins cleave the phosphodiester linkage between the phosphate and headgroup of certain phospholipids (sphingolipid and lysolipid substrates), forming an alcohol (often choline) and a cyclic phosphate. This toxin acts on sphingomyelin (SM). It may also act on ceramide phosphoethanolamine (CPE), lysophosphatidylcholine (LPC) and lysophosphatidylethanolamine (LPE), but not on lysophosphatidylserine (LPS), and lysophosphatidylglycerol (LPG). It acts by transphosphatidylation, releasing exclusively cyclic phosphate products as second products. Induces dermonecrosis, hemolysis, increased vascular permeability, edema, inflammatory response, and platelet aggregation. The sequence is that of Dermonecrotic toxin LdSicTox-alphaIB1bii from Loxosceles deserta (Desert recluse spider).